Here is a 470-residue protein sequence, read N- to C-terminus: Protein naked cuticle homolog 1 (470 aa).

2 disordered regions span residues 1 to 21 (MGKL…PEGD) and 90 to 114 (PPEK…PCPG). Glycine 2 carries the N-myristoyl glycine lipid modification. Over residues 92-109 (EKTDGLGSGDEKKMERVS) the composition is skewed to basic and acidic residues. The tract at residues 125–190 (QCDVSMEEDS…LRVKLTVAPD (66 aa)) is interaction with DVL1, DVL2 and DVL3. The region spanning 131-166 (EEDSRQEWTFTLYDFDNNGKVTREDITSLLHTIYEV) is the EF-hand domain. 5 residues coordinate Ca(2+): aspartate 144, aspartate 146, asparagine 148, lysine 150, and aspartate 155. A compositionally biased stretch (polar residues) spans 192–205 (SQSKRSVLVNQADL). 4 disordered regions span residues 192–228 (SQSK…KKQR), 271–314 (QFGP…QGVD), 337–357 (GTQD…KSVG), and 446–470 (GQPV…FYQT). The span at 210–227 (PRAETKPTEDLRSWEKKQ) shows a compositional bias: basic and acidic residues. Residues 271–281 (QFGPGSPSVAQ) are compositionally biased toward polar residues. A compositionally biased stretch (basic residues) spans 452–470 (HEHHHHHEHHHHYHHFYQT).

The protein belongs to the NKD family. As to quaternary structure, interacts with DVL1, DVL2, DVL3 and PPP2R3A. In terms of tissue distribution, expressed in colon, heart, kidney, leukocyte, liver, lung, ovary, pancreas, placenta, prostate, skeletal muscle, small intestine and spleen.

The protein resides in the cell membrane. It localises to the cytoplasm. Functionally, cell autonomous antagonist of the canonical Wnt signaling pathway. May activate a second Wnt signaling pathway that controls planar cell polarity. This Homo sapiens (Human) protein is Protein naked cuticle homolog 1 (NKD1).